The sequence spans 280 residues: MDIKINDITLGNNSPFVLFGGINVLESLDSTLQTCAHYVEVTRKLGIPYIFKASFDKANRSSIHSYRGVGLEEGLKIFEKVKAEFGIPVITDVHEPHQCQPVAEVCDVIQLPAFLARQTDLVVAMAKTGNVVNIKKPQFLSPSQMKNIVEKFHEAGNGKLILCERGSSFGYDNLVVDMLGFGVMKQTCGNLPVIFDVTHSLQTRDAGSAASGGRRAQALDLALAGMATRLAGLFLESHPDPKLAKCDGPSALPLHLLEDFLIRIKALDDLIKSQPILTIE.

It belongs to the KdsA family.

The protein localises to the cytoplasm. The catalysed reaction is D-arabinose 5-phosphate + phosphoenolpyruvate + H2O = 3-deoxy-alpha-D-manno-2-octulosonate-8-phosphate + phosphate. It functions in the pathway carbohydrate biosynthesis; 3-deoxy-D-manno-octulosonate biosynthesis; 3-deoxy-D-manno-octulosonate from D-ribulose 5-phosphate: step 2/3. Its pathway is bacterial outer membrane biogenesis; lipopolysaccharide biosynthesis. This chain is 2-dehydro-3-deoxyphosphooctonate aldolase, found in Neisseria meningitidis serogroup B (strain ATCC BAA-335 / MC58).